We begin with the raw amino-acid sequence, 520 residues long: Anthranilate synthase component 1 (520 aa).

Residues S40, K50, and 291-293 contribute to the L-tryptophan site; that span reads PYM. Position 328–329 (328–329) interacts with chorismate; sequence GT. E361 contributes to the Mg(2+) binding site. Residues Y449, R469, 483–485, and G485 contribute to the chorismate site; that span reads GAG. E498 contributes to the Mg(2+) binding site.

This sequence belongs to the anthranilate synthase component I family. Homodimer. In fact, exists in a monomer-dimer equilibrium in solution, shifted spontaneously in favor of the dimer; the monomer has a reduced activity compared with the dimer. Heterotetramer consisting of two non-identical subunits: a beta subunit (TrpG) and a large alpha subunit (TrpE) (Potential). The cofactor is Mg(2+).

The enzyme catalyses chorismate + L-glutamine = anthranilate + pyruvate + L-glutamate + H(+). It participates in amino-acid biosynthesis; L-tryptophan biosynthesis; L-tryptophan from chorismate: step 1/5. With respect to regulation, cooperatively feedback inhibited by tryptophan. In terms of biological role, part of a heterotetrameric complex that catalyzes the two-step biosynthesis of anthranilate, an intermediate in the biosynthesis of L-tryptophan. In the first step, the glutamine-binding beta subunit (TrpG) of anthranilate synthase (AS) provides the glutamine amidotransferase activity which generates ammonia as a substrate that, along with chorismate, is used in the second step, catalyzed by the large alpha subunit of AS (TrpE) to produce anthranilate. In the absence of TrpG, TrpE can synthesize anthranilate directly from chorismate and high concentrations of ammonia. The polypeptide is Anthranilate synthase component 1 (trpE) (Salmonella typhimurium (strain LT2 / SGSC1412 / ATCC 700720)).